The chain runs to 460 residues: ATP synthase subunit beta (460 aa).

150 to 157 (GGAGVGKT) provides a ligand contact to ATP.

It belongs to the ATPase alpha/beta chains family. F-type ATPases have 2 components, CF(1) - the catalytic core - and CF(0) - the membrane proton channel. CF(1) has five subunits: alpha(3), beta(3), gamma(1), delta(1), epsilon(1). CF(0) has three main subunits: a(1), b(2) and c(9-12). The alpha and beta chains form an alternating ring which encloses part of the gamma chain. CF(1) is attached to CF(0) by a central stalk formed by the gamma and epsilon chains, while a peripheral stalk is formed by the delta and b chains.

It localises to the cell inner membrane. It catalyses the reaction ATP + H2O + 4 H(+)(in) = ADP + phosphate + 5 H(+)(out). Produces ATP from ADP in the presence of a proton gradient across the membrane. The catalytic sites are hosted primarily by the beta subunits. The sequence is that of ATP synthase subunit beta from Enterobacter sp. (strain 638).